The sequence spans 96 residues: Aspartyl/glutamyl-tRNA(Asn/Gln) amidotransferase subunit C (96 aa).

The protein belongs to the GatC family. As to quaternary structure, heterotrimer of A, B and C subunits.

The catalysed reaction is L-glutamyl-tRNA(Gln) + L-glutamine + ATP + H2O = L-glutaminyl-tRNA(Gln) + L-glutamate + ADP + phosphate + H(+). It catalyses the reaction L-aspartyl-tRNA(Asn) + L-glutamine + ATP + H2O = L-asparaginyl-tRNA(Asn) + L-glutamate + ADP + phosphate + 2 H(+). In terms of biological role, allows the formation of correctly charged Asn-tRNA(Asn) or Gln-tRNA(Gln) through the transamidation of misacylated Asp-tRNA(Asn) or Glu-tRNA(Gln) in organisms which lack either or both of asparaginyl-tRNA or glutaminyl-tRNA synthetases. The reaction takes place in the presence of glutamine and ATP through an activated phospho-Asp-tRNA(Asn) or phospho-Glu-tRNA(Gln). The polypeptide is Aspartyl/glutamyl-tRNA(Asn/Gln) amidotransferase subunit C (Sulfurimonas denitrificans (strain ATCC 33889 / DSM 1251) (Thiomicrospira denitrificans (strain ATCC 33889 / DSM 1251))).